The chain runs to 662 residues: UPF0313 protein CPF_1407 (662 aa).

The Radical SAM core domain maps to 296–567; sequence AIEEVKFSIV…AMQRALLQFK (272 aa). Residues Cys-310, Cys-314, and Cys-317 each coordinate [4Fe-4S] cluster. Residues 596–662 are disordered; sequence IRDKNSFGKG…QRSSKGKKRR (67 aa). Positions 618–632 are enriched in basic and acidic residues; it reads SRNENSGRRESEDKK. Residues 633–644 are compositionally biased toward basic residues; it reads RSSHSKKQRGNK.

This sequence belongs to the UPF0313 family. [4Fe-4S] cluster is required as a cofactor.

The chain is UPF0313 protein CPF_1407 from Clostridium perfringens (strain ATCC 13124 / DSM 756 / JCM 1290 / NCIMB 6125 / NCTC 8237 / Type A).